The sequence spans 308 residues: uncharacterized protein (308 aa).

This is an uncharacterized protein from Bos taurus (Bovine).